The primary structure comprises 359 residues: Protein RecA (359 aa).

74-81 (GPESSGKT) is an ATP binding site.

This sequence belongs to the RecA family.

It is found in the cytoplasm. Can catalyze the hydrolysis of ATP in the presence of single-stranded DNA, the ATP-dependent uptake of single-stranded DNA by duplex DNA, and the ATP-dependent hybridization of homologous single-stranded DNAs. It interacts with LexA causing its activation and leading to its autocatalytic cleavage. This chain is Protein RecA, found in Anaplasma marginale (strain Florida).